The chain runs to 219 residues: Ribose-5-phosphate isomerase A (219 aa).

Substrate-binding positions include 28–31 (TGST), 81–84 (DGAD), and 94–97 (KGGG). Catalysis depends on glutamate 103, which acts as the Proton acceptor. Position 121 (lysine 121) interacts with substrate.

The protein belongs to the ribose 5-phosphate isomerase family. As to quaternary structure, homodimer.

The enzyme catalyses aldehydo-D-ribose 5-phosphate = D-ribulose 5-phosphate. It participates in carbohydrate degradation; pentose phosphate pathway; D-ribose 5-phosphate from D-ribulose 5-phosphate (non-oxidative stage): step 1/1. Catalyzes the reversible conversion of ribose-5-phosphate to ribulose 5-phosphate. The protein is Ribose-5-phosphate isomerase A of Salmonella choleraesuis (strain SC-B67).